A 318-amino-acid polypeptide reads, in one-letter code: Pheromone-regulated membrane protein 5 (318 aa).

The helical transmembrane segment at 75–98 threads the bilayer; it reads GTVFIVVGGIAGVIFLAILLWWVI. A Phosphoserine modification is found at Ser-129. Low complexity predominate over residues 238-247; it reads TISSSSASSL. The disordered stretch occupies residues 238-318; sequence TISSSSASSL…HMLEGKEQDE (81 aa). Over residues 250–261 the composition is skewed to basic and acidic residues; it reads GNEKEVGEDIRK. The span at 276–285 shows a compositional bias: polar residues; sequence SPESDGSVNR. Ser-279, Ser-282, and Ser-288 each carry phosphoserine. The span at 309–318 shows a compositional bias: basic and acidic residues; the sequence is HMLEGKEQDE. Lys-314 participates in a covalent cross-link: Glycyl lysine isopeptide (Lys-Gly) (interchain with G-Cter in ubiquitin).

Belongs to the PRM5 family.

It is found in the membrane. This Saccharomyces cerevisiae (strain ATCC 204508 / S288c) (Baker's yeast) protein is Pheromone-regulated membrane protein 5 (PRM5).